The following is a 65-amino-acid chain: Hainantoxin-X.2 (65 aa).

Residues 1–20 (MNVKILVLVAVLCLVVSTHA) form the signal peptide. Positions 21 to 37 (ERHSKTDMEDSPMIQER) are excised as a propeptide. 3 disulfide bridges follow: C39–C56, C46–C59, and C55–C64.

The protein belongs to the neurotoxin 36 family. 02 subfamily. As to expression, expressed by the venom gland.

The protein resides in the secreted. In terms of biological role, reversibly blocks N-type calcium channels (Cav2.2/CACNA1B) in rat dorsal root ganglion cells. Elicits no toxic symptoms in either vertebrates or invertebrates during a period of 48 hours post-injection, when it was assayed in vivo by direct injection into mice and cockroaches. The sequence is that of Hainantoxin-X.2 from Cyriopagopus hainanus (Chinese bird spider).